Here is a 367-residue protein sequence, read N- to C-terminus: N-acetylmuramoyl-L-alanine amidase BlyA (367 aa).

The region spanning 24-158 is the N-acetylmuramoyl-L-alanine amidase domain; it reads VKKCVLHYTA…DITHKNCPAP (135 aa). A disordered region spans residues 178–204; the sequence is SGKSVSKASPTKPTTSSPSSSSAVSGS. The segment covering 180–204 has biased composition (low complexity); sequence KSVSKASPTKPTTSSPSSSSAVSGS. SH3b domains follow at residues 202–271 and 298–367; these read SGSL…YVDV and GKIK…GSTI.

It belongs to the N-acetylmuramoyl-L-alanine amidase 2 family.

The protein resides in the secreted. The catalysed reaction is Hydrolyzes the link between N-acetylmuramoyl residues and L-amino acid residues in certain cell-wall glycopeptides.. Functionally, autolysins are involved in some important biological processes such as cell separation, cell-wall turnover, competence for genetic transformation, formation of the flagella and sporulation. Involved in prophage SP-beta-mediated cell lysis. The chain is N-acetylmuramoyl-L-alanine amidase BlyA (blyA) from Bacillus subtilis (strain 168).